We begin with the raw amino-acid sequence, 199 residues long: Putative pseudouridine methyltransferase (199 aa).

Positions 132 and 186 each coordinate S-adenosyl-L-methionine.

The protein belongs to the methyltransferase superfamily. TrmY family.

The protein resides in the cytoplasm. The protein is Putative pseudouridine methyltransferase of Vibrio campbellii (strain ATCC BAA-1116).